Here is an 85-residue protein sequence, read N- to C-terminus: Phosphocarrier protein HPr (85 aa).

The region spanning 1–85 is the HPr domain; it reads MFQQEVTITA…HLVKLMAELE (85 aa). Histidine 15 acts as the Pros-phosphohistidine intermediate in catalysis.

The protein resides in the cytoplasm. In terms of biological role, general (non sugar-specific) component of the phosphoenolpyruvate-dependent sugar phosphotransferase system (sugar PTS). This major carbohydrate active-transport system catalyzes the phosphorylation of incoming sugar substrates concomitantly with their translocation across the cell membrane. The phosphoryl group from phosphoenolpyruvate (PEP) is transferred to the phosphoryl carrier protein HPr by enzyme I. Phospho-HPr then transfers it to the PTS EIIA domain. In Klebsiella pneumoniae, this protein is Phosphocarrier protein HPr (ptsH).